The primary structure comprises 500 residues: Glycerol kinase (500 aa).

Thr11 lines the ADP pocket. Thr11, Thr12, and Ser13 together coordinate ATP. Position 11 (Thr11) interacts with sn-glycerol 3-phosphate. Residue Arg15 participates in ADP binding. Residues Arg81, Glu82, Tyr133, and Asp242 each coordinate sn-glycerol 3-phosphate. Residues Arg81, Glu82, Tyr133, Asp242, and Gln243 each contribute to the glycerol site. Residues Thr264 and Gly307 each contribute to the ADP site. Positions 264, 307, 311, and 411 each coordinate ATP. Residue Gly411 coordinates ADP.

It belongs to the FGGY kinase family.

The enzyme catalyses glycerol + ATP = sn-glycerol 3-phosphate + ADP + H(+). The protein operates within polyol metabolism; glycerol degradation via glycerol kinase pathway; sn-glycerol 3-phosphate from glycerol: step 1/1. Inhibited by fructose 1,6-bisphosphate (FBP). Functionally, key enzyme in the regulation of glycerol uptake and metabolism. Catalyzes the phosphorylation of glycerol to yield sn-glycerol 3-phosphate. This chain is Glycerol kinase, found in Bradyrhizobium sp. (strain ORS 278).